The sequence spans 289 residues: Sphingomyelinase D (289 aa).

An N-terminal signal peptide occupies residues 1–22 (MQSISVLICVLLALSILNFTVA). Histidine 34 is an active-site residue. Mg(2+) is bound by residues glutamate 54, aspartate 56, and aspartate 103. An SMD-tail motif is present at residues 282 to 289 (ATEDDAPW).

This sequence belongs to the sphingomyelinase D/phospholipase D family. Requires Mg(2+) as cofactor.

It localises to the secreted. It catalyses the reaction a sphingomyelin + H2O = an N-acylsphing-4-enine 1-phosphate + choline + H(+). With respect to regulation, sphingomyelinase activity is reduced by 33 percent following addition of EDTA. Functionally, catalyzes the hydrolysis of sphingomyelin. Sphingomyelinases D are produced by some spider in their venoms, but also by arthropods such as ticks, or pathogenic bacteria and fungi. They might play a role in pathogenicity through different mechanisms, such as membrane destabilization and host cell penetration, but also pulmonary inflammation and cutaneous lesions. In Aspergillus flavus (strain ATCC 200026 / FGSC A1120 / IAM 13836 / NRRL 3357 / JCM 12722 / SRRC 167), this protein is Sphingomyelinase D.